Here is a 204-residue protein sequence, read N- to C-terminus: Arginine exporter protein ArgO (204 aa).

A run of 6 helical transmembrane segments spans residues 1-21 (MFAV…PLGP), 37-57 (LMVA…GIFG), 67-87 (LLLG…GWGA), 111-131 (IIAT…DTFV), 147-167 (WFAL…ALLA), and 179-199 (VQRV…LQLA).

This sequence belongs to the LysE/ArgO transporter (TC 2.A.75) family.

The protein localises to the cell inner membrane. The catalysed reaction is L-arginine(in) = L-arginine(out). Involved in the export of arginine. Important to control the intracellular level of arginine and the correct balance between arginine and lysine. The sequence is that of Arginine exporter protein ArgO from Pectobacterium carotovorum subsp. carotovorum (strain PC1).